We begin with the raw amino-acid sequence, 115 residues long: U3-lycotoxin-Ls1a (115 aa).

A signal peptide spans 1 to 20 (MKFVLLFGVLLVTLFSYSSA). Residues 21 to 44 (EMLDDFDQAVEDELLSLIEKEEAR) constitute a propeptide that is removed on maturation. Intrachain disulfides connect C48–C63, C55–C72, C62–C87, and C74–C85.

Belongs to the neurotoxin 19 (CSTX) family. 01 subfamily. In terms of tissue distribution, expressed by the venom gland.

The protein localises to the secreted. This chain is U3-lycotoxin-Ls1a, found in Lycosa singoriensis (Wolf spider).